The following is a 465-amino-acid chain: Soluble pyridine nucleotide transhydrogenase (465 aa).

FAD is bound at residue 36 to 45 (ERYDNVGGGC).

Belongs to the class-I pyridine nucleotide-disulfide oxidoreductase family. Requires FAD as cofactor.

The protein localises to the cytoplasm. The catalysed reaction is NAD(+) + NADPH = NADH + NADP(+). In terms of biological role, conversion of NADPH, generated by peripheral catabolic pathways, to NADH, which can enter the respiratory chain for energy generation. This chain is Soluble pyridine nucleotide transhydrogenase, found in Sodalis glossinidius (strain morsitans).